Consider the following 61-residue polypeptide: uncharacterized protein (61 aa).

This sequence belongs to the DUP/COS family.

This is an uncharacterized protein from Saccharomyces cerevisiae (strain ATCC 204508 / S288c) (Baker's yeast).